We begin with the raw amino-acid sequence, 140 residues long: ATP synthase epsilon chain (140 aa).

This sequence belongs to the ATPase epsilon chain family. In terms of assembly, F-type ATPases have 2 components, CF(1) - the catalytic core - and CF(0) - the membrane proton channel. CF(1) has five subunits: alpha(3), beta(3), gamma(1), delta(1), epsilon(1). CF(0) has three main subunits: a, b and c.

It is found in the cell inner membrane. Functionally, produces ATP from ADP in the presence of a proton gradient across the membrane. This Janthinobacterium sp. (strain Marseille) (Minibacterium massiliensis) protein is ATP synthase epsilon chain.